Reading from the N-terminus, the 344-residue chain is Holliday junction branch migration complex subunit RuvB (344 aa).

The segment at 4–194 (CLLRFCYNSL…FGITGHMEYY (191 aa)) is large ATPase domain (RuvB-L). ATP-binding positions include leucine 33, arginine 34, glycine 75, lysine 78, threonine 79, threonine 80, 141–143 (EDF), arginine 184, tyrosine 194, and arginine 231. Threonine 79 serves as a coordination point for Mg(2+). The segment at 195–265 (TDIDLTEIVE…ITDKALTMLD (71 aa)) is small ATPAse domain (RuvB-S). Positions 268–344 (HEGLDYVDQK…YEHLGYRYTE (77 aa)) are head domain (RuvB-H). 4 residues coordinate DNA: arginine 304, arginine 323, arginine 325, and arginine 328.

The protein belongs to the RuvB family. Homohexamer. Forms an RuvA(8)-RuvB(12)-Holliday junction (HJ) complex. HJ DNA is sandwiched between 2 RuvA tetramers; dsDNA enters through RuvA and exits via RuvB. An RuvB hexamer assembles on each DNA strand where it exits the tetramer. Each RuvB hexamer is contacted by two RuvA subunits (via domain III) on 2 adjacent RuvB subunits; this complex drives branch migration. In the full resolvosome a probable DNA-RuvA(4)-RuvB(12)-RuvC(2) complex forms which resolves the HJ.

The protein resides in the cytoplasm. The catalysed reaction is ATP + H2O = ADP + phosphate + H(+). Its function is as follows. The RuvA-RuvB-RuvC complex processes Holliday junction (HJ) DNA during genetic recombination and DNA repair, while the RuvA-RuvB complex plays an important role in the rescue of blocked DNA replication forks via replication fork reversal (RFR). RuvA specifically binds to HJ cruciform DNA, conferring on it an open structure. The RuvB hexamer acts as an ATP-dependent pump, pulling dsDNA into and through the RuvAB complex. RuvB forms 2 homohexamers on either side of HJ DNA bound by 1 or 2 RuvA tetramers; 4 subunits per hexamer contact DNA at a time. Coordinated motions by a converter formed by DNA-disengaged RuvB subunits stimulates ATP hydrolysis and nucleotide exchange. Immobilization of the converter enables RuvB to convert the ATP-contained energy into a lever motion, pulling 2 nucleotides of DNA out of the RuvA tetramer per ATP hydrolyzed, thus driving DNA branch migration. The RuvB motors rotate together with the DNA substrate, which together with the progressing nucleotide cycle form the mechanistic basis for DNA recombination by continuous HJ branch migration. Branch migration allows RuvC to scan DNA until it finds its consensus sequence, where it cleaves and resolves cruciform DNA. This is Holliday junction branch migration complex subunit RuvB from Streptococcus mutans serotype c (strain ATCC 700610 / UA159).